We begin with the raw amino-acid sequence, 426 residues long: Dynein regulatory complex protein 10 (426 aa).

Disordered regions lie at residues 18–37 (TRIGPKTDPSKRPADPLKPL) and 399–426 (SKKKRGKGKAKGKEKGKQKGKEKGKGKK). The IQ domain maps to 377–406 (MVRAATLIQAFWKGYLVRSLLRSKKKRGKG). The span at 399–408 (SKKKRGKGKA) shows a compositional bias: basic residues. The span at 409 to 426 (KGKEKGKQKGKEKGKGKK) shows a compositional bias: basic and acidic residues.

This sequence belongs to the DRC10 family. Component of the nexin-dynein regulatory complex (N-DRC). Interacts with CFAP52.

It localises to the cytoplasm. The protein resides in the cytoskeleton. Its subcellular location is the flagellum axoneme. Its function is as follows. Component of the nexin-dynein regulatory complex (N-DRC), a key regulator of ciliary/flagellar motility which maintains the alignment and integrity of the distal axoneme and regulates microtubule sliding in motile axonemes. The sequence is that of Dynein regulatory complex protein 10 (IQCD) from Macaca fascicularis (Crab-eating macaque).